Here is a 540-residue protein sequence, read N- to C-terminus: Signal peptide peptidase-like 3 (540 aa).

The N-terminal stretch at 1 to 28 (MSSFDPPNHRYSALVLILLLLGFSVAAA) is a signal peptide. Residues 29–194 (DDVSWTEDSS…LYAPKRPAVD (166 aa)) are Lumenal-facing. Positions 98 to 172 (SHLSSRLDGH…ISKSSGDALN (75 aa)) constitute a PA domain. N-linked (GlcNAc...) asparagine glycans are attached at residues asparagine 155 and asparagine 172. The helical transmembrane segment at 195–215 (LTAGLLLLMAVGTVVVASLWS) threads the bilayer. Over 216-250 (ELTDPDQANESYSILAKDVSSAGTRKDDPEKEILD) the chain is Cytoplasmic. Residues 251 to 273 (ISVTGAVFFIVTASIFLLLLFYF) form a helical membrane-spanning segment. The Lumenal segment spans residues 274-276 (MSS). Residues 277–299 (WFVWVLTIFFCIGGMQGMHNIIM) form a helical membrane-spanning segment. The Cytoplasmic portion of the chain corresponds to 300–321 (AVILRKCRHLARKSVKLPLLGT). A helical transmembrane segment spans residues 322-342 (MSVLSLLVNIVCLAFAVFWFI). Residues 343–347 (KRHTS) lie on the Lumenal side of the membrane. Residues 348-368 (YSWVGQDILGICLMITALQVV) form a helical membrane-spanning segment. The Cytoplasmic segment spans residues 369-377 (RLPNIKVAT). A helical membrane pass occupies residues 378 to 398 (VLLCCAFVYDIFWVFISPLIF). Residue aspartate 387 is part of the active site. At 399-429 (HESVMIVVAQGDSSTGESIPMLLRIPRFFDP) the chain is on the lumenal side. Residues 430–450 (WGGYDMIGFGDILFPGLLISF) traverse the membrane as a helical segment. Aspartate 440 is a catalytic residue. At 451-466 (ASRYDKIKKRVISNGY) the chain is on the cytoplasmic side. A helical transmembrane segment spans residues 467–487 (FLWLTIGYGIGLLLTYLGLYL). At 488-492 (MDGHG) the chain is on the lumenal side. A helical transmembrane segment spans residues 493-513 (QPALLYIVPCTLGLAVILGLV). Residues 494–496 (PAL) carry the PAL motif. Residues 514-540 (RGELKELWNYGIEESESHTPEDPMPVA) lie on the Cytoplasmic side of the membrane.

The protein belongs to the peptidase A22B family. Post-translationally, glycosylated. In terms of tissue distribution, ubiquitous.

It localises to the endosome membrane. In terms of biological role, intramembrane-cleaving aspartic protease (I-CLiP) that cleaves type II membrane signal peptides in the hydrophobic plane of the membrane. The chain is Signal peptide peptidase-like 3 (SPPL3) from Arabidopsis thaliana (Mouse-ear cress).